The chain runs to 741 residues: MPKLNRCAIAIFTILSAISSPTLLANINEPSGEAADIISQVADSHAIKYYNAADWQAEDNALPSLAELRDLVINQQKRVLVDFSQISDAEGQAEMQAQFRKAYGVGFANQFIVITEHKGELLFTPFDQAEEVDPQLLEAPRTARLLARSGFASPAPANSETNTLPHVAFYISVNRAISDEECTFNNSWLWKNEKGSRPFCKDANISLIYRVNLERSLQYGIVGSATPDAKIVRISLDDDSTGAGIHLNDQLGYRQFGASYTTLDAYFREWSTDAIAQDYRFVFNASNNKAQILKTFPVDNINEKFERKEVSGFELGVTGGVEVSGDGPKAKLEARASYTQSRWLTYNTQDYRIERNAKNAQAVSFTWNRQQYATAESLLNRSTDALWVNTYPVDVNRISPLSYASFVPKMDVIYKASATETGSTDFIIDSSVNIRPIYNGAYKHYYVVGAHQSYHGFEDTPRRRITKSASFTVDWDHPVFTGGRPVNLQLASFNNRCIQVDAQGRLAANTCDSQQSAQSFIYDQLGRYVSASNTKLCLDGEALDALQPCNQNLTQRWEWRKGTDELTNVYSGESLGHDKQTGELGLYASSNDAVSLRTITAYTDVFNAQESSPILGYTQGKMNQQRVGQDHRLYVRAGAAIDALGSASDLLVGGNGGSLSSVDLSGVKSITATSGDFQYGGQQLVALTFTYQDGRQQTVGSKAYVTNAHEDRFDLPAAAKITQLKIWSDDWLVKGVQFDLN.

The signal sequence occupies residues 1-25 (MPKLNRCAIAIFTILSAISSPTLLA). The propeptide occupies 26 to 157 (NINEPSGEAA…RSGFASPAPA (132 aa)). 3 disulfide bridges follow: C182–C200, C497–C511, and C537–C549. Residues 484-575 (RPVNLQLASF…LTNVYSGESL (92 aa)) enclose the Ricin B-type lectin domain. The interval 607–741 (NAQESSPILG…LVKGVQFDLN (135 aa)) is beta-prism domain.

It belongs to the HlyA hemolysin family. In terms of assembly, monomer. Homoheptamer. After binding to target membranes the protein assembles into a heptameric pre-pore complex. Proteolytic cleavage triggers a conformation change that is required for membrane insertion and pore formation. Proteolytical cleavage is required to convert the 80 kDa hemolysin precursor into the active 65 kDa hemolysin.

The protein resides in the secreted. It is found in the host cell membrane. Its function is as follows. Bacterial hemolysin that causes cytolysis by forming heptameric pores in target host membranes. The protein is Hemolysin (hlyA) of Vibrio cholerae serotype O1 (strain ATCC 39315 / El Tor Inaba N16961).